Here is a 320-residue protein sequence, read N- to C-terminus: Ferrochelatase (320 aa).

Histidine 194 and glutamate 275 together coordinate Fe cation.

The protein belongs to the ferrochelatase family.

It is found in the cytoplasm. It carries out the reaction heme b + 2 H(+) = protoporphyrin IX + Fe(2+). It participates in porphyrin-containing compound metabolism; protoheme biosynthesis; protoheme from protoporphyrin-IX: step 1/1. Functionally, catalyzes the ferrous insertion into protoporphyrin IX. This chain is Ferrochelatase, found in Xylella fastidiosa (strain M12).